We begin with the raw amino-acid sequence, 740 residues long: Catalase-peroxidase (740 aa).

The disordered stretch occupies residues 1–32 (MPEDRPIEDSPPIGEAQTDAPAGGCPAGFGRI). Residues 113–237 (WHAAGTYRVS…LAAVQMGLIY (125 aa)) constitute a cross-link (tryptophyl-tyrosyl-methioninium (Trp-Tyr) (with M-263)). His114 (proton acceptor) is an active-site residue. The segment at residues 237–263 (YVNPEGPNGNPDPQASAIDIRETFGRM) is a cross-link (tryptophyl-tyrosyl-methioninium (Tyr-Met) (with W-113)). His278 serves as a coordination point for heme b.

It belongs to the peroxidase family. Peroxidase/catalase subfamily. Homodimer or homotetramer. It depends on heme b as a cofactor. Post-translationally, formation of the three residue Trp-Tyr-Met cross-link is important for the catalase, but not the peroxidase activity of the enzyme.

It catalyses the reaction H2O2 + AH2 = A + 2 H2O. It carries out the reaction 2 H2O2 = O2 + 2 H2O. Bifunctional enzyme with both catalase and broad-spectrum peroxidase activity. May play a role in the intracellular survival of mycobacteria. In Mycolicibacterium smegmatis (Mycobacterium smegmatis), this protein is Catalase-peroxidase.